A 482-amino-acid chain; its full sequence is Cardiolipin synthase (482 aa).

The next 2 helical transmembrane spans lie at 4 to 24 (LAYLLVILLILNVFFAAVTVF) and 34 to 54 (WAWLLVLTFVPIFGFIIYLIF). 2 consecutive PLD phosphodiesterase domains span residues 217 to 244 (LNYRNHRKLAIIDGDVGYIGGFNIGDEY) and 395 to 422 (DNGFIHAKTLVVDGEIASVGTANMDFRS). Active-site residues include H222, K224, D229, H400, K402, and D407.

This sequence belongs to the phospholipase D family. Cardiolipin synthase subfamily.

Its subcellular location is the cell membrane. The catalysed reaction is 2 a 1,2-diacyl-sn-glycero-3-phospho-(1'-sn-glycerol) = a cardiolipin + glycerol. Its function is as follows. Catalyzes the reversible phosphatidyl group transfer from one phosphatidylglycerol molecule to another to form cardiolipin (CL) (diphosphatidylglycerol) and glycerol. The protein is Cardiolipin synthase (cls) of Listeria monocytogenes serotype 4b (strain CLIP80459).